A 197-amino-acid chain; its full sequence is Small ribosomal subunit protein eS1 (197 aa).

This sequence belongs to the eukaryotic ribosomal protein eS1 family.

The sequence is that of Small ribosomal subunit protein eS1 from Sulfolobus acidocaldarius (strain ATCC 33909 / DSM 639 / JCM 8929 / NBRC 15157 / NCIMB 11770).